Reading from the N-terminus, the 311-residue chain is Homoserine O-acetyltransferase (311 aa).

Catalysis depends on Cys142, which acts as the Acyl-thioester intermediate. Residues Lys163 and Ser192 each coordinate substrate. The active-site Proton acceptor is His235. Residue Glu237 is part of the active site. Arg249 lines the substrate pocket.

The protein belongs to the MetA family.

It localises to the cytoplasm. It catalyses the reaction L-homoserine + acetyl-CoA = O-acetyl-L-homoserine + CoA. It participates in amino-acid biosynthesis; L-methionine biosynthesis via de novo pathway; O-acetyl-L-homoserine from L-homoserine: step 1/1. Its function is as follows. Transfers an acetyl group from acetyl-CoA to L-homoserine, forming acetyl-L-homoserine. This is Homoserine O-acetyltransferase from Lysinibacillus sphaericus (strain C3-41).